We begin with the raw amino-acid sequence, 428 residues long: Immunoglobulin superfamily member 11 (428 aa).

Residues 1–22 (MTRRRSAPASWLLVSLLGVATS) form the signal peptide. The region spanning 23–136 (LEVSESPGSV…DRGGRNIGVT (114 aa)) is the Ig-like V-type domain. Topologically, residues 23-240 (LEVSESPGSV…QVISPQPRSV (218 aa)) are extracellular. 2 disulfides stabilise this stretch: Cys44-Cys120 and Cys165-Cys215. N-linked (GlcNAc...) asparagine glycosylation is present at Asn102. The region spanning 144–234 (PSAPQCQIQG…TCLLDLQVIS (91 aa)) is the Ig-like C2-type domain. Residues 241 to 261 (GVIAGAVGTGAVLIVICLALI) form a helical membrane-spanning segment. Residues 262-428 (SGAFFYWRSK…PAQSRAGSLV (167 aa)) lie on the Cytoplasmic side of the membrane. Arg375 is modified (omega-N-methylarginine). Over residues 376-389 (GSSPQVLPRNNGSV) the composition is skewed to polar residues. Residues 376–396 (GSSPQVLPRNNGSVSRKPWPQ) form a disordered region.

N-glycosylated. As to expression, highly expressed in testis and detected in kidney and adrenal gland. In brain, expressed in commissure fibers of the corpus callosum and pyramidal cell layers of the dentate gyrus and hippocampus where it is probably expressed by both neurons and glial cells.

It is found in the cell membrane. In terms of biological role, functions as a cell adhesion molecule through homophilic interaction. Stimulates cell growth. In Mus musculus (Mouse), this protein is Immunoglobulin superfamily member 11 (Igsf11).